The chain runs to 428 residues: uncharacterized protein (428 aa).

Residues S72–S91 form a disordered region. S127 carries the post-translational modification Phosphoserine.

This is an uncharacterized protein from Saccharomyces cerevisiae (strain ATCC 204508 / S288c) (Baker's yeast).